Reading from the N-terminus, the 1180-residue chain is RecBCD enzyme subunit RecB (1180 aa).

The segment at Met1–Lys852 is DNA-binding and helicase activity, interacts with RecC. Positions Thr3–Ser448 constitute a UvrD-like helicase ATP-binding domain. An ATP-binding site is contributed by Ala24–Thr31. The UvrD-like helicase C-terminal domain maps to Ser478 to Gly745. The segment at Asn905 to Phe1180 is nuclease activity, interacts with RecD and RecA. The Mg(2+) site is built by His964, Asp1075, and Asp1088. Asp1088 serves as the catalytic For nuclease activity.

This sequence belongs to the helicase family. UvrD subfamily. In terms of assembly, heterotrimer of RecB, RecC and RecD. All subunits contribute to DNA-binding. Interacts with RecA. Requires Mg(2+) as cofactor.

It catalyses the reaction Exonucleolytic cleavage (in the presence of ATP) in either 5'- to 3'- or 3'- to 5'-direction to yield 5'-phosphooligonucleotides.. It carries out the reaction Couples ATP hydrolysis with the unwinding of duplex DNA by translocating in the 3'-5' direction.. The enzyme catalyses ATP + H2O = ADP + phosphate + H(+). A helicase/nuclease that prepares dsDNA breaks (DSB) for recombinational DNA repair. Binds to DSBs and unwinds DNA via a highly rapid and processive ATP-dependent bidirectional helicase activity. Unwinds dsDNA until it encounters a Chi (crossover hotspot instigator) sequence from the 3' direction. Cuts ssDNA a few nucleotides 3' to the Chi site. The properties and activities of the enzyme are changed at Chi. The Chi-altered holoenzyme produces a long 3'-ssDNA overhang and facilitates RecA-binding to the ssDNA for homologous DNA recombination and repair. Holoenzyme degrades any linearized DNA that is unable to undergo homologous recombination. In the holoenzyme this subunit contributes ATPase, 3'-5' helicase, exonuclease activity and loads RecA onto ssDNA. This is RecBCD enzyme subunit RecB from Buchnera aphidicola subsp. Baizongia pistaciae (strain Bp).